The primary structure comprises 655 residues: p-hydroxybenzoic acid efflux pump subunit AaeB (655 aa).

The next 11 helical transmembrane spans lie at 13–33, 38–58, 69–89, 93–113, 121–141, 152–172, 370–390, 407–427, 431–451, 459–479, and 482–502; these read FAVK…HFQL, WAVL…GGEP, LRII…IAMI, LLMI…SSLV, WGLA…EPLL, EIVI…PRSI, LFWL…IAVV, FIYG…VIIP, QSML…GIEV, MGAL…TFHF, and FLDS…VILL.

It belongs to the aromatic acid exporter ArAE (TC 2.A.85) family.

It is found in the cell inner membrane. Its function is as follows. Forms an efflux pump with AaeA. Could function as a metabolic relief valve, allowing to eliminate certain compounds when they accumulate to high levels in the cell. The protein is p-hydroxybenzoic acid efflux pump subunit AaeB of Shigella boydii serotype 18 (strain CDC 3083-94 / BS512).